Here is a 64-residue protein sequence, read N- to C-terminus: Large ribosomal subunit protein bL35 (64 aa).

A compositionally biased stretch (basic residues) spans Met1–Gly17. Residues Met1–Gly64 are disordered. Over residues Leu21–Glu33 the composition is skewed to basic and acidic residues.

The protein belongs to the bacterial ribosomal protein bL35 family.

This Corynebacterium kroppenstedtii (strain DSM 44385 / JCM 11950 / CIP 105744 / CCUG 35717) protein is Large ribosomal subunit protein bL35.